The following is a 321-amino-acid chain: Histidine N-alpha-methyltransferase (321 aa).

Residue Tyr56 coordinates L-histidine. S-adenosyl-L-methionine is bound by residues Gly86, Lys92, Asp113, and 141 to 142 (DF). L-histidine contacts are provided by residues Asn166, Tyr206, and 282-284 (EVS).

This sequence belongs to the methyltransferase superfamily. EgtD family. As to quaternary structure, monomer.

It catalyses the reaction L-histidine + 3 S-adenosyl-L-methionine = hercynine + 3 S-adenosyl-L-homocysteine + 3 H(+). The protein operates within amino-acid biosynthesis; ergothioneine biosynthesis. Functionally, catalyzes the SAM-dependent triple methylation of the alpha-amino group of histidine to form hercynine, a step in the biosynthesis pathway of ergothioneine. Among all the proteinogenic amino acids, only L-histidine is a substrate. In Mycolicibacterium smegmatis (strain ATCC 700084 / mc(2)155) (Mycobacterium smegmatis), this protein is Histidine N-alpha-methyltransferase.